The sequence spans 249 residues: DNA polymerase sliding clamp (249 aa).

The protein belongs to the PCNA family. The subunits circularize to form a toroid; DNA passes through its center. Replication factor C (RFC) is required to load the toroid on the DNA. Homotrimer. Interacts with NucS.

Sliding clamp subunit that acts as a moving platform for DNA processing. Responsible for tethering the catalytic subunit of DNA polymerase and other proteins to DNA during high-speed replication. Regulates activity of NucS endonuclease and prevents non-specific cleavage. This chain is DNA polymerase sliding clamp, found in Pyrococcus abyssi (strain GE5 / Orsay).